Reading from the N-terminus, the 267-residue chain is Small ribosomal subunit protein uS2 (267 aa).

The tract at residues 224–267 (GRQGEDQVDEKTFEGQKSEAAEGDKKTADNSMEDIVNAVEGDNK) is disordered. Residues 225-251 (RQGEDQVDEKTFEGQKSEAAEGDKKTA) show a composition bias toward basic and acidic residues.

This sequence belongs to the universal ribosomal protein uS2 family.

In Levilactobacillus brevis (strain ATCC 367 / BCRC 12310 / CIP 105137 / JCM 1170 / LMG 11437 / NCIMB 947 / NCTC 947) (Lactobacillus brevis), this protein is Small ribosomal subunit protein uS2.